The sequence spans 563 residues: Arginine--tRNA ligase (563 aa).

Positions 121–131 match the 'HIGH' region motif; sequence PNIAKPFSIGH.

Belongs to the class-I aminoacyl-tRNA synthetase family. In terms of assembly, monomer.

It localises to the cytoplasm. It carries out the reaction tRNA(Arg) + L-arginine + ATP = L-arginyl-tRNA(Arg) + AMP + diphosphate. In Streptococcus pyogenes serotype M4 (strain MGAS10750), this protein is Arginine--tRNA ligase.